Here is a 509-residue protein sequence, read N- to C-terminus: Aspartyl/glutamyl-tRNA(Asn/Gln) amidotransferase subunit B (509 aa).

This sequence belongs to the GatB/GatE family. GatB subfamily. In terms of assembly, heterotrimer of A, B and C subunits.

The enzyme catalyses L-glutamyl-tRNA(Gln) + L-glutamine + ATP + H2O = L-glutaminyl-tRNA(Gln) + L-glutamate + ADP + phosphate + H(+). The catalysed reaction is L-aspartyl-tRNA(Asn) + L-glutamine + ATP + H2O = L-asparaginyl-tRNA(Asn) + L-glutamate + ADP + phosphate + 2 H(+). Functionally, allows the formation of correctly charged Asn-tRNA(Asn) or Gln-tRNA(Gln) through the transamidation of misacylated Asp-tRNA(Asn) or Glu-tRNA(Gln) in organisms which lack either or both of asparaginyl-tRNA or glutaminyl-tRNA synthetases. The reaction takes place in the presence of glutamine and ATP through an activated phospho-Asp-tRNA(Asn) or phospho-Glu-tRNA(Gln). This chain is Aspartyl/glutamyl-tRNA(Asn/Gln) amidotransferase subunit B, found in Psychrobacter arcticus (strain DSM 17307 / VKM B-2377 / 273-4).